The following is a 227-amino-acid chain: Ribonuclease 3 (227 aa).

The region spanning 3 to 130 is the RNase III domain; the sequence is TNAISKIIKY…LIGAIYLDGG (128 aa). E43 is a binding site for Mg(2+). The active site involves D47. Positions 116 and 119 each coordinate Mg(2+). Residue E119 is part of the active site. The DRBM domain maps to 155–224; the sequence is DAKTILQEWA…ASLMLAKINY (70 aa).

The protein belongs to the ribonuclease III family. As to quaternary structure, homodimer. Mg(2+) serves as cofactor.

The protein resides in the cytoplasm. The enzyme catalyses Endonucleolytic cleavage to 5'-phosphomonoester.. Its function is as follows. Digests double-stranded RNA. Involved in the processing of primary rRNA transcript to yield the immediate precursors to the large and small rRNAs (23S and 16S). Processes some mRNAs, and tRNAs when they are encoded in the rRNA operon. Processes pre-crRNA and tracrRNA of type II CRISPR loci if present in the organism. This Ehrlichia ruminantium (strain Welgevonden) protein is Ribonuclease 3.